The primary structure comprises 207 residues: Imidazole glycerol phosphate synthase subunit HisH (207 aa).

Residues 1 to 206 form the Glutamine amidotransferase type-1 domain; that stretch reads MMIVIDYDAG…KEYVYENTAR (206 aa). The active-site Nucleophile is the cysteine 79. Catalysis depends on residues histidine 181 and glutamate 183.

In terms of assembly, heterodimer of HisH and HisF.

The protein localises to the cytoplasm. The catalysed reaction is 5-[(5-phospho-1-deoxy-D-ribulos-1-ylimino)methylamino]-1-(5-phospho-beta-D-ribosyl)imidazole-4-carboxamide + L-glutamine = D-erythro-1-(imidazol-4-yl)glycerol 3-phosphate + 5-amino-1-(5-phospho-beta-D-ribosyl)imidazole-4-carboxamide + L-glutamate + H(+). The enzyme catalyses L-glutamine + H2O = L-glutamate + NH4(+). It participates in amino-acid biosynthesis; L-histidine biosynthesis; L-histidine from 5-phospho-alpha-D-ribose 1-diphosphate: step 5/9. In terms of biological role, IGPS catalyzes the conversion of PRFAR and glutamine to IGP, AICAR and glutamate. The HisH subunit catalyzes the hydrolysis of glutamine to glutamate and ammonia as part of the synthesis of IGP and AICAR. The resulting ammonia molecule is channeled to the active site of HisF. The chain is Imidazole glycerol phosphate synthase subunit HisH from Streptococcus sanguinis (strain SK36).